The chain runs to 220 residues: Small ribosomal subunit protein uS3 (220 aa).

In terms of domain architecture, KH type-2 spans 43-111 (IRSYLTKTLD…QVQLNILEVK (69 aa)).

The protein belongs to the universal ribosomal protein uS3 family. In terms of assembly, part of the 30S ribosomal subunit. Forms a tight complex with proteins S10 and S14.

Its function is as follows. Binds the lower part of the 30S subunit head. Binds mRNA in the 70S ribosome, positioning it for translation. The sequence is that of Small ribosomal subunit protein uS3 from Tropheryma whipplei (strain TW08/27) (Whipple's bacillus).